Reading from the N-terminus, the 247-residue chain is UPF0246 protein LCABL_22600 (247 aa).

This sequence belongs to the UPF0246 family.

This Lacticaseibacillus casei (strain BL23) (Lactobacillus casei) protein is UPF0246 protein LCABL_22600.